A 518-amino-acid polypeptide reads, in one-letter code: ATP synthase subunit alpha (518 aa).

169-176 (GDRKTGKT) serves as a coordination point for ATP.

It belongs to the ATPase alpha/beta chains family. In terms of assembly, F-type ATPases have 2 components, CF(1) - the catalytic core - and CF(0) - the membrane proton channel. CF(1) has five subunits: alpha(3), beta(3), gamma(1), delta(1), epsilon(1). CF(0) has three main subunits: a(1), b(2) and c(9-12). The alpha and beta chains form an alternating ring which encloses part of the gamma chain. CF(1) is attached to CF(0) by a central stalk formed by the gamma and epsilon chains, while a peripheral stalk is formed by the delta and b chains.

The protein localises to the cell membrane. It carries out the reaction ATP + H2O + 4 H(+)(in) = ADP + phosphate + 5 H(+)(out). Produces ATP from ADP in the presence of a proton gradient across the membrane. The alpha chain is a regulatory subunit. The chain is ATP synthase subunit alpha from Enterococcus hirae (strain ATCC 9790 / DSM 20160 / JCM 8729 / LMG 6399 / NBRC 3181 / NCIMB 6459 / NCDO 1258 / NCTC 12367 / WDCM 00089 / R).